Reading from the N-terminus, the 152-residue chain is Small ribosomal subunit protein uS13 (152 aa).

Residues 133-152 (GQHTKTTGRRGRTVGVSKKK) form a disordered region.

Belongs to the universal ribosomal protein uS13 family.

The protein resides in the cytoplasm. Located at the top of the head of the 40S subunit, it contacts several helices of the 18S rRNA. In Spodoptera frugiperda (Fall armyworm), this protein is Small ribosomal subunit protein uS13 (RpS18).